The chain runs to 467 residues: Cysteine--tRNA ligase (467 aa).

Zn(2+) is bound at residue cysteine 29. Residues 31-41 (PTVYNYIHIGN) carry the 'HIGH' region motif. Zn(2+) is bound by residues cysteine 209, histidine 234, and glutamate 238. The short motif at 266-270 (KMSKS) is the 'KMSKS' region element. Lysine 269 contacts ATP. Residue serine 270 is modified to Phosphoserine.

This sequence belongs to the class-I aminoacyl-tRNA synthetase family. Monomer. The cofactor is Zn(2+).

The protein resides in the cytoplasm. It carries out the reaction tRNA(Cys) + L-cysteine + ATP = L-cysteinyl-tRNA(Cys) + AMP + diphosphate. The polypeptide is Cysteine--tRNA ligase (Bacillus licheniformis (strain ATCC 14580 / DSM 13 / JCM 2505 / CCUG 7422 / NBRC 12200 / NCIMB 9375 / NCTC 10341 / NRRL NRS-1264 / Gibson 46)).